Reading from the N-terminus, the 224-residue chain is MKKAVVLLSGGMDSAAVIALAQEQGFAVYALSVRYGQRHTSELDAAARVAAAQGVVAHKVVDVDLRSIGGSALTDDIDVPDAGGDGIPVTYVPARNTIMLSLALGWAEVVGANDLFCGVNAVDYSGYPDCRPEFVRAFEVLANLATKAGVEGAGLRVHAPLQFLSKADIVREGVRLGVDFGLTVSCYRADADGRACGHCDACRLRAAGFADAGVPDPTHYAILS.

8–18 (LSGGMDSAAVI) provides a ligand contact to ATP. Residues C186, C196, C199, and C202 each contribute to the Zn(2+) site.

The protein belongs to the QueC family. Zn(2+) serves as cofactor.

The catalysed reaction is 7-carboxy-7-deazaguanine + NH4(+) + ATP = 7-cyano-7-deazaguanine + ADP + phosphate + H2O + H(+). Its pathway is purine metabolism; 7-cyano-7-deazaguanine biosynthesis. In terms of biological role, catalyzes the ATP-dependent conversion of 7-carboxy-7-deazaguanine (CDG) to 7-cyano-7-deazaguanine (preQ(0)). In Xanthomonas oryzae pv. oryzae (strain MAFF 311018), this protein is 7-cyano-7-deazaguanine synthase.